A 419-amino-acid polypeptide reads, in one-letter code: Carboxypeptidase A1 (419 aa).

Residues 1 to 16 (MWGLLIFSVLLGGVLA) form the signal peptide. Positions 17-110 (KEDFVGHQVL…QEQMFASQGR (94 aa)) are cleaved as a propeptide — activation peptide. In terms of domain architecture, Peptidase M14 spans 121-414 (TYHTLEEIYD…LALLTIMEHT (294 aa)). 2 residues coordinate Zn(2+): histidine 179 and glutamate 182. Substrate is bound by residues 179–182 (HSRE), arginine 237, and 254–255 (NR). An intrachain disulfide couples cysteine 248 to cysteine 271. A Zn(2+)-binding site is contributed by histidine 306. Substrate contacts are provided by residues 307–308 (SY) and tyrosine 358. Catalysis depends on glutamate 380, which acts as the Proton donor/acceptor.

Belongs to the peptidase M14 family. As to quaternary structure, monomer. May form a complex with proelastase 2. Zn(2+) serves as cofactor.

It localises to the secreted. The enzyme catalyses Release of a C-terminal amino acid, but little or no action with -Asp, -Glu, -Arg, -Lys or -Pro.. The catalysed reaction is leukotriene C4 + H2O = leukotriene F4 + glycine. Functionally, carboxypeptidase that catalyzes the release of a C-terminal amino acid, but has little or no action with -Asp, -Glu, -Arg, -Lys or -Pro. Catalyzes the conversion of leukotriene C4 to leukotriene F4 via the hydrolysis of an amide bond. This Sus scrofa (Pig) protein is Carboxypeptidase A1 (CPA1).